The primary structure comprises 211 residues: CASP-like protein 3A1 (211 aa).

The Cytoplasmic portion of the chain corresponds to Met-1–Gly-45. The chain crosses the membrane as a helical span at residues Val-46–Met-66. Over Val-67–Gln-95 the chain is Extracellular. Asn-87 carries an N-linked (GlcNAc...) asparagine glycan. A helical membrane pass occupies residues Phe-96–Ala-116. At His-117–His-131 the chain is on the cytoplasmic side. A helical membrane pass occupies residues Ala-132–Ala-152. Residues Ala-153–Ser-186 lie on the Extracellular side of the membrane. An N-linked (GlcNAc...) asparagine glycan is attached at Asn-160. Residues Ile-187–Trp-207 traverse the membrane as a helical segment. At Leu-208–Pro-211 the chain is on the cytoplasmic side.

It belongs to the Casparian strip membrane proteins (CASP) family. As to quaternary structure, homodimer and heterodimers.

Its subcellular location is the cell membrane. This Sorghum bicolor (Sorghum) protein is CASP-like protein 3A1.